A 1292-amino-acid polypeptide reads, in one-letter code: Zinc finger CCCH domain-containing protein 44 (1292 aa).

A compositionally biased stretch (polar residues) spans 1–10 (MENQQKQLQQ). Disordered regions lie at residues 1 to 24 (MENQ…REES) and 72 to 107 (IDEA…KKED). The segment at 110 to 176 (EDVCFICFDG…SYMCYTCTFS (67 aa)) adopts a PHD-type zinc-finger fold. Disordered stretches follow at residues 256 to 313 (PWKE…LKKA) and 401 to 426 (KGAK…VHDP). An SWIB/MDM2 domain is found at 313 to 396 (APGDTSWATK…LKLLESHVLI (84 aa)). The span at 404 to 414 (KTTNGETTHAV) shows a compositional bias: polar residues. In terms of domain architecture, Plus3 spans 453–586 (AIDVHNINLI…TAATLQAMRI (134 aa)). Disordered stretches follow at residues 624-731 (PEVH…TQGP), 777-832 (TTLP…SNDP), 876-915 (DVRE…INGS), and 1170-1245 (TTVE…HNNR). A compositionally biased stretch (low complexity) spans 661–675 (QNKGVNLNNVGNNVQ). Positions 689–698 (VHADKDDCSK) are enriched in basic and acidic residues. Polar residues predominate over residues 699 to 708 (VHNNSSNIQE). The region spanning 716–770 (SEIWHYRDPTGKTQGPFSMVQLRRWKSSGHFPPYLRIWRAHENQDESVLLTDALA) is the GYF domain. Low complexity predominate over residues 813–829 (VNTSATSSSSSTVTAHS). Composition is skewed to polar residues over residues 882 to 899 (GTDQ…NTTK) and 906 to 915 (NGGSVSINGS). 2 stretches are compositionally biased toward low complexity: residues 1188–1206 (SSEP…SARG) and 1231–1244 (NNGH…SHNN). A C3H1-type zinc finger spans residues 1267–1292 (PKGLKICKFYESGYCKRGASCSFWHP).

The chain is Zinc finger CCCH domain-containing protein 44 from Arabidopsis thaliana (Mouse-ear cress).